The sequence spans 317 residues: tRNA(Ile)-lysidine synthase (317 aa).

30-35 is a binding site for ATP; the sequence is SGGSDS.

This sequence belongs to the tRNA(Ile)-lysidine synthase family.

The protein localises to the cytoplasm. The enzyme catalyses cytidine(34) in tRNA(Ile2) + L-lysine + ATP = lysidine(34) in tRNA(Ile2) + AMP + diphosphate + H(+). Its function is as follows. Ligates lysine onto the cytidine present at position 34 of the AUA codon-specific tRNA(Ile) that contains the anticodon CAU, in an ATP-dependent manner. Cytidine is converted to lysidine, thus changing the amino acid specificity of the tRNA from methionine to isoleucine. The protein is tRNA(Ile)-lysidine synthase of Chlamydia felis (strain Fe/C-56) (Chlamydophila felis).